Consider the following 282-residue polypeptide: tRNA uridine(34) hydroxylase (282 aa).

Residues 128 to 222 (DGRPVVMLDT…YFEEVGGSHY (95 aa)) form the Rhodanese domain. The Cysteine persulfide intermediate role is filled by C182.

The protein belongs to the TrhO family.

The catalysed reaction is uridine(34) in tRNA + AH2 + O2 = 5-hydroxyuridine(34) in tRNA + A + H2O. In terms of biological role, catalyzes oxygen-dependent 5-hydroxyuridine (ho5U) modification at position 34 in tRNAs. This Cupriavidus metallidurans (strain ATCC 43123 / DSM 2839 / NBRC 102507 / CH34) (Ralstonia metallidurans) protein is tRNA uridine(34) hydroxylase.